The chain runs to 805 residues: Na(+)/H(+) antiporter subunit A1 (805 aa).

20 helical membrane passes run 1–21 (MSLLHIAVLLPLIFALIIPFV), 30–50 (LGWFVLPIPVVLFIYFLSYIS), 79–99 (LGLLFSLLITGIGCLIVLYSI), 117–137 (LFMGAMLGLVLSDNLIILYLF), 166–186 (MLVTVFGGLSLLGGIILLSIA), 201–221 (EIQTSPFFIFSMILVLIGAMT), 226–246 (FPFYVWLPDAMEAPTPVSAYL), 265–285 (IFAVSQGWIWTVTAVGLITLF), 300–320 (ILAFSTVSQLGMIMAMLGVGA), 337–357 (FTAAIFHLINHATFKGALFMI), 377–397 (LTIMPISFTITLITSLSMAGI), 427–447 (LGILIPITAIIGSVFTFVYSI), 480–500 (ILAILVIVFGLFPAILSGSII), 531–551 (LGIYIVGIVLIITFSYWIYLL), 591–611 (LVIIFASLIVIALVTLLVTPF), 623–643 (PFELIIVVLIITAASMIIFAK), 646–666 (LFSIIMASAVGYSVAIFFIFF), 671–691 (LALTQFVVESISTALFLLCFY), 707–727 (LVNIVISVGAGIVVTVLGLIA), and 766–786 (TLFESSVLGIAGLGVYTMIKL).

It belongs to the CPA3 antiporters (TC 2.A.63) subunit A family. As to quaternary structure, may form a heterooligomeric complex that consists of seven subunits: mnhA1, mnhB1, mnhC1, mnhD1, mnhE1, mnhF1 and mnhG1.

The protein localises to the cell membrane. Mnh complex is a Na(+)/H(+) antiporter involved in Na(+) excretion. This is Na(+)/H(+) antiporter subunit A1 (mnhA1) from Staphylococcus saprophyticus subsp. saprophyticus (strain ATCC 15305 / DSM 20229 / NCIMB 8711 / NCTC 7292 / S-41).